The chain runs to 585 residues: Serine/threonine-protein kinase Nek3 (585 aa).

One can recognise a Protein kinase domain in the interval 4-258 (YEVLEQIGKG…AAELLKHPHL (255 aa)). Residues 10 to 18 (IGKGSFGSA) and lysine 33 each bind ATP. Catalysis depends on aspartate 129, which acts as the Proton acceptor. Disordered stretches follow at residues 354–413 (GNHS…TPVN) and 489–511 (DSSK…SNPL). Polar residues-rich tracts occupy residues 400 to 413 (RASQ…TPVN) and 498 to 511 (SSDP…SNPL).

Belongs to the protein kinase superfamily. NEK Ser/Thr protein kinase family. NIMA subfamily. As to quaternary structure, interacts with PLIM2B. Expressed in pollen grains.

The catalysed reaction is L-seryl-[protein] + ATP = O-phospho-L-seryl-[protein] + ADP + H(+). The enzyme catalyses L-threonyl-[protein] + ATP = O-phospho-L-threonyl-[protein] + ADP + H(+). Functionally, may be involved in plant development processes. May function downstream of DCW11 in retrograde signaling from the mitochondria to the nucleus. Seems to be involved in the mechanism of cytoplasmic male sterility (CMS) occurrence. The protein is Serine/threonine-protein kinase Nek3 of Oryza sativa subsp. japonica (Rice).